The chain runs to 524 residues: Butyrophilin subfamily 1 member A1 (524 aa).

The N-terminal stretch at 1–26 is a signal peptide; sequence MAVPTNSCLLVCLLTLTVLQLPTLDS. The Extracellular segment spans residues 27–247; sequence AAPFDVTAPQ…APFVPRLTPW (221 aa). Ig-like V-type domains follow at residues 29–141 and 149–235; these read PFDV…VYLK and PQIS…VEIS. 2 disulfides stabilise this stretch: Cys-51-Cys-125 and Cys-165-Cys-219. Asn-56 and Asn-216 each carry an N-linked (GlcNAc...) asparagine glycan. The chain crosses the membrane as a helical span at residues 248-268; it reads IVAVAIILLALGFLTIGSIFF. At 269–524 the chain is on the cytoplasmic side; that stretch reads TWKLYKERSS…IPFSPSQAAP (256 aa). The 195-residue stretch at 286 to 480 folds into the B30.2/SPRY domain; sequence SKERLLEELR…LTICSTANGP (195 aa).

The protein belongs to the immunoglobulin superfamily. BTN/MOG family. As to quaternary structure, seems to associate with xanthine dehydrogenase/oxidase. Post-translationally, N-glycosylated. As to expression, strongly expressed in lactating mammary tissue (at protein level). About 100-fold lower levels in virgin mammary tissue. Also detected in spleen and thymus at 10-20 times lower levels compared to those detected in virgin mammary gland. Very low levels in several other tissues, including brain, heart, kidney, lymph node, lung and small intestine. In the thymus, detected in the stroma, in epithelial cells (at protein level). Most prominent in medullary areas of the thymus and at the corticomedullary junction (at protein level).

It localises to the membrane. May function in the secretion of milk-fat droplets. May act as a specific membrane-associated receptor for the association of cytoplasmic droplets with the apical plasma membrane. Inhibits the proliferation of CD4 and CD8 T-cells activated by anti-CD3 antibodies, T-cell metabolism and IL2 and IFNG secretion. This is Butyrophilin subfamily 1 member A1 (Btn1a1) from Mus musculus (Mouse).